A 269-amino-acid chain; its full sequence is MKSISSYLSFAHMNITHTTEQHAENQPHWKTILDIAPFVSITFPAIMCLIFDEDSFEESPFLRFITLLLPFSYSAVQYALLYTNWKSHNKPEPILHTTLYYTLSLLLLAFTIISILSIIPFSLNEWDHAASFFYPIVLPSFTVPPAYLLSSSYFLVPRQIRLTDTVISILISVCSIVNVLLVFKEFNYYPYSAIISSISVLLQLLSEKHCLFKQSPPSTASSRAAVLILTLILAVLVYTFLGYGAIYILDDHFHLLGKMKSILPSEPHQ.

It belongs to the UPF0328 family.

The chain is UPF0328 protein ECU03_0020 from Encephalitozoon cuniculi (strain GB-M1) (Microsporidian parasite).